A 316-amino-acid chain; its full sequence is tRNA uridine(34) hydroxylase (316 aa).

In terms of domain architecture, Rhodanese spans 136 to 230; sequence ADENTVVVDK…YLEEVPREQS (95 aa). The active-site Cysteine persulfide intermediate is cysteine 190.

It belongs to the TrhO family.

It carries out the reaction uridine(34) in tRNA + AH2 + O2 = 5-hydroxyuridine(34) in tRNA + A + H2O. Functionally, catalyzes oxygen-dependent 5-hydroxyuridine (ho5U) modification at position 34 in tRNAs. The sequence is that of tRNA uridine(34) hydroxylase from Brucella abortus (strain 2308).